The primary structure comprises 387 residues: 1-deoxy-D-xylulose 5-phosphate reductoisomerase (387 aa).

Positions 10, 11, 12, 13, 36, 38, and 122 each coordinate NADPH. 1-deoxy-D-xylulose 5-phosphate is bound at residue Lys-123. Glu-124 serves as a coordination point for NADPH. Asp-148 is a binding site for Mn(2+). 1-deoxy-D-xylulose 5-phosphate is bound by residues Ser-149, Glu-150, Ser-174, and His-197. Glu-150 provides a ligand contact to Mn(2+). An NADPH-binding site is contributed by Gly-203. 1-deoxy-D-xylulose 5-phosphate-binding residues include Ser-210, Asn-215, Lys-216, and Glu-219. Mn(2+) is bound at residue Glu-219.

The protein belongs to the DXR family. Requires Mg(2+) as cofactor. Mn(2+) is required as a cofactor.

It carries out the reaction 2-C-methyl-D-erythritol 4-phosphate + NADP(+) = 1-deoxy-D-xylulose 5-phosphate + NADPH + H(+). It participates in isoprenoid biosynthesis; isopentenyl diphosphate biosynthesis via DXP pathway; isopentenyl diphosphate from 1-deoxy-D-xylulose 5-phosphate: step 1/6. In terms of biological role, catalyzes the NADPH-dependent rearrangement and reduction of 1-deoxy-D-xylulose-5-phosphate (DXP) to 2-C-methyl-D-erythritol 4-phosphate (MEP). The polypeptide is 1-deoxy-D-xylulose 5-phosphate reductoisomerase (Chloroherpeton thalassium (strain ATCC 35110 / GB-78)).